The primary structure comprises 318 residues: Thymidylate synthase (318 aa).

DUMP is bound by residues R25 and 180 to 181 (RR). The active-site Nucleophile is the C200. DUMP contacts are provided by residues 220–223 (RSGD), N231, and 261–263 (HIY). D223 serves as a coordination point for (6R)-5,10-methylene-5,6,7,8-tetrahydrofolate. A317 serves as a coordination point for (6R)-5,10-methylene-5,6,7,8-tetrahydrofolate.

Belongs to the thymidylate synthase family. Bacterial-type ThyA subfamily. As to quaternary structure, homodimer.

It localises to the cytoplasm. It carries out the reaction dUMP + (6R)-5,10-methylene-5,6,7,8-tetrahydrofolate = 7,8-dihydrofolate + dTMP. Its pathway is pyrimidine metabolism; dTTP biosynthesis. In terms of biological role, catalyzes the reductive methylation of 2'-deoxyuridine-5'-monophosphate (dUMP) to 2'-deoxythymidine-5'-monophosphate (dTMP) while utilizing 5,10-methylenetetrahydrofolate (mTHF) as the methyl donor and reductant in the reaction, yielding dihydrofolate (DHF) as a by-product. This enzymatic reaction provides an intracellular de novo source of dTMP, an essential precursor for DNA biosynthesis. This Bacillus cereus (strain ATCC 14579 / DSM 31 / CCUG 7414 / JCM 2152 / NBRC 15305 / NCIMB 9373 / NCTC 2599 / NRRL B-3711) protein is Thymidylate synthase.